Reading from the N-terminus, the 778-residue chain is Serine/threonine-protein kinase BRSK1 (778 aa).

The span at 1-12 shows a compositional bias: gly residues; that stretch reads MSSGSKEGGGGS. The interval 1 to 29 is disordered; that stretch reads MSSGSKEGGGGSPAYHLPHPHPHPPQHAQ. In terms of domain architecture, Protein kinase spans 34 to 285; it reads YRLEKTLGKG…LEQIQKHPWY (252 aa). ATP is bound by residues 40–48 and lysine 63; that span reads LGKGQTGLV. Catalysis depends on aspartate 156, which acts as the Proton acceptor. Threonine 189 carries the phosphothreonine; by LKB1 modification. Serine 193 is subject to Phosphoserine. The UBA domain occupies 314–356; it reads ELDPDVLESMASLGCFRDRERLHRELRSEEENQEKMIYYLLLD. Residues 362–383 are compositionally biased toward basic and acidic residues; the sequence is PSCEDQDLPPRNDVDPPRKRVD. The tract at residues 362 to 548 is disordered; sequence PSCEDQDLPP…SPGGGVGGAA (187 aa). Phosphoserine is present on residues serine 399, serine 443, serine 447, and serine 450. The segment covering 430–457 has biased composition (low complexity); the sequence is SRSVSGASTGLSSSPLSSPRSPVFSFSP. Arginine 466, arginine 481, arginine 484, and arginine 498 each carry omega-N-methylarginine. Over residues 491 to 508 the composition is skewed to pro residues; that stretch reads QPPPPSARSTPLPGPPGS. Serine 508 is subject to Phosphoserine. Over residues 509–533 the composition is skewed to low complexity; it reads PRSSGGTPLHSPLHTPRASPTGTPG. The residue at position 525 (arginine 525) is an Omega-N-methylarginine. Phosphothreonine occurs at positions 529 and 535. The residue at position 550 (arginine 550) is an Omega-N-methylarginine. Threonine 583 carries the post-translational modification Phosphothreonine. Phosphoserine occurs at positions 586, 587, and 601. Residues 719-778 are disordered; the sequence is QPSVQALADEKNGAQTRPAGTPPRSLQPPPGRPDPDLSSSPRRGPSKDKKLLATNGTPLP.

It belongs to the protein kinase superfamily. CAMK Ser/Thr protein kinase family. SNF1 subfamily. Mg(2+) is required as a cofactor. Post-translationally, phosphorylated at Thr-189 by STK11/LKB1 in complex with STE20-related adapter-alpha (STRADA) pseudo kinase and CAB39. Not phosphorylated at Thr-189 by CaMKK2. In contrast, it is phosphorylated and activated by CaMKK1. May be inactivated via dephosphorylation of Thr-189 by PP2C. May be autophosphorylated. In terms of tissue distribution, mainly present in brain. Present in presynaptic nerve terminals (at protein level).

The protein resides in the cytoplasm. The protein localises to the nucleus. It is found in the cytoskeleton. It localises to the microtubule organizing center. Its subcellular location is the centrosome. The protein resides in the synapse. The protein localises to the presynaptic active zone. It is found in the cytoplasmic vesicle. It localises to the secretory vesicle. Its subcellular location is the synaptic vesicle. It catalyses the reaction L-seryl-[protein] + ATP = O-phospho-L-seryl-[protein] + ADP + H(+). It carries out the reaction L-threonyl-[protein] + ATP = O-phospho-L-threonyl-[protein] + ADP + H(+). The catalysed reaction is L-seryl-[tau protein] + ATP = O-phospho-L-seryl-[tau protein] + ADP + H(+). The enzyme catalyses L-threonyl-[tau protein] + ATP = O-phospho-L-threonyl-[tau protein] + ADP + H(+). Its activity is regulated as follows. Activated by phosphorylation on Thr-189 by STK11/LKB1. Serine/threonine-protein kinase that plays a key role in polarization of neurons and centrosome duplication. Phosphorylates CDC25B, CDC25C, MAPT/TAU, RIMS1, TUBG1, TUBG2 and WEE1. Following phosphorylation and activation by STK11/LKB1, acts as a key regulator of polarization of cortical neurons, probably by mediating phosphorylation of microtubule-associated proteins such as MAPT/TAU at 'Thr-523' and 'Ser-573'. Also regulates neuron polarization by mediating phosphorylation of WEE1 at 'Ser-642' in postmitotic neurons, leading to down-regulate WEE1 activity in polarized neurons. Also acts as a positive regulator of centrosome duplication by mediating phosphorylation of gamma-tubulin (TUBG1 and TUBG2) at 'Ser-131', leading to translocation of gamma-tubulin and its associated proteins to the centrosome. Involved in the UV-induced DNA damage checkpoint response, probably by inhibiting CDK1 activity through phosphorylation and activation of WEE1, and inhibition of CDC25B and CDC25C. In neurons, localizes to synaptic vesicles and plays a role in neurotransmitter release, possibly by phosphorylating RIMS1. This is Serine/threonine-protein kinase BRSK1 (Brsk1) from Rattus norvegicus (Rat).